The sequence spans 156 residues: Protein UXT (156 aa).

Belongs to the UXT family. Homohexamer. Component of the PAQosome complex which is responsible for the biogenesis of several protein complexes and which consists of R2TP complex members RUVBL1, RUVBL2, RPAP3 and PIH1D1, URI complex members PFDN2, PFDN6, PDRG1, UXT and URI1 as well as ASDURF, POLR2E and DNAAF10/WDR92. Interacts with LRPPRC. Interacts with androgen receptor AR (via N-terminus). Interacts with estrogen receptor ESR1; the interaction relocalizes ESR1 to the cytoplasm. In the nucleus, interacts specifically with RELA (via RHD domain) and forms a dynamic complex with NF-kappa-B and is recruited to the NF-kappa-B enhanceosome upon stimulation. Interacts with MECOM. Interacts with URI1.

It is found in the cytoplasm. The protein resides in the nucleus. Its subcellular location is the cytoskeleton. It localises to the microtubule organizing center. The protein localises to the centrosome. It is found in the spindle pole. Functionally, involved in gene transcription regulation. Acts in concert with the corepressor URI1 to regulate androgen receptor AR-mediated transcription. Together with URI1, associates with chromatin to the NKX3-1 promoter region. Negatively regulates the transcriptional activity of the estrogen receptor ESR1 by inducing its translocation into the cytoplasm. May act as nuclear chaperone that facilitates the formation of the NF-kappa-B enhanceosome and thus positively regulates NF-kappa-B transcription activity. Potential component of mitochondrial-associated LRPPRC, a multidomain organizer that potentially integrates mitochondria and the microtubular cytoskeleton with chromosome remodeling. Increasing concentrations of UXT contributes to progressive aggregation of mitochondria and cell death potentially through its association with LRPPRC. Suppresses cell transformation and it might mediate this function by interaction and inhibition of the biological activity of cell proliferation and survival stimulatory factors like MECOM. The chain is Protein UXT (UXT) from Bos taurus (Bovine).